A 557-amino-acid polypeptide reads, in one-letter code: MDLTKEEILPYGHHVAKLDYRKILDRCADRPDGKYIDVTAITPTPLGEGKSTSVMGLVQGLGKRDKSVVGAIRQPSGGPTMNIKGSAAGGGRSQCIPLNEFSLGLTGDINSIMNAHNLGMVALTARMQHEANYTDAQLAQRNLKRLDIHPKKIQFSWIIDFCAQALRNITIGIGGKMDGPTIQSSFAIAVSSELMAILAIANDLADMRARIAKVVVAYDKQDRPITTADLEVDGAMTAWMVQAINPNLMQTLEGQPVLVHAGPFANIAIGQSSVIADRVGLKIAGYNVTESGFGADIGFEKFWNLKCRFSGNKPNCAVIVATIRALKCHGGAPIPVPGKPMPEEYAKENVGWVEEGCKNLLHHINTVKKAGINPVVCINAFYTDRPNEIKAVKRICEHAGARVAVSTHWEHGGDGALEFADAVIDACEEKNDFKFLYELDTPLEKRIELIAKEVYGADGVSYTPEARTKLTQLAKDPEMAELGTCMVKTHLSLSHDPKLKGVPKGWTLPIRDILTYKGAGFVVPVAGAISLMPGTGSDPAYRRVDVDLQTGRVKGVF.

44-51 provides a ligand contact to ATP; that stretch reads TPLGEGKS.

The protein belongs to the formate--tetrahydrofolate ligase family.

The enzyme catalyses (6S)-5,6,7,8-tetrahydrofolate + formate + ATP = (6R)-10-formyltetrahydrofolate + ADP + phosphate. It participates in one-carbon metabolism; tetrahydrofolate interconversion. The sequence is that of Formate--tetrahydrofolate ligase from Desulfotalea psychrophila (strain LSv54 / DSM 12343).